Here is a 246-residue protein sequence, read N- to C-terminus: Hydroxyacylglutathione hydrolase (246 aa).

7 residues coordinate Zn(2+): His-58, His-60, Asp-62, His-63, His-117, Asp-137, and His-175.

Belongs to the metallo-beta-lactamase superfamily. Glyoxalase II family. In terms of assembly, monomer. Requires Zn(2+) as cofactor.

It catalyses the reaction an S-(2-hydroxyacyl)glutathione + H2O = a 2-hydroxy carboxylate + glutathione + H(+). It participates in secondary metabolite metabolism; methylglyoxal degradation; (R)-lactate from methylglyoxal: step 2/2. Its function is as follows. Thiolesterase that catalyzes the hydrolysis of S-D-lactoyl-glutathione to form glutathione and D-lactic acid. This Prochlorococcus marinus (strain MIT 9301) protein is Hydroxyacylglutathione hydrolase.